Reading from the N-terminus, the 156-residue chain is MNINATLIGQSVAFFIFVLFCMKFVWPPVIAALHERQKKIADGLDAASRAARDLELAQEKAGQQLREAKAQAAEIIEQAKKRGTQIVDEARETARVEADRVKAQAQAEIEQELNGVKDALRAQLGSLAVNGAEKILGATIDQNAHAELVNKLAAEI.

A helical membrane pass occupies residues 12-32 (VAFFIFVLFCMKFVWPPVIAA).

This sequence belongs to the ATPase B chain family. In terms of assembly, F-type ATPases have 2 components, F(1) - the catalytic core - and F(0) - the membrane proton channel. F(1) has five subunits: alpha(3), beta(3), gamma(1), delta(1), epsilon(1). F(0) has three main subunits: a(1), b(2) and c(10-14). The alpha and beta chains form an alternating ring which encloses part of the gamma chain. F(1) is attached to F(0) by a central stalk formed by the gamma and epsilon chains, while a peripheral stalk is formed by the delta and b chains.

It is found in the cell inner membrane. F(1)F(0) ATP synthase produces ATP from ADP in the presence of a proton or sodium gradient. F-type ATPases consist of two structural domains, F(1) containing the extramembraneous catalytic core and F(0) containing the membrane proton channel, linked together by a central stalk and a peripheral stalk. During catalysis, ATP synthesis in the catalytic domain of F(1) is coupled via a rotary mechanism of the central stalk subunits to proton translocation. Functionally, component of the F(0) channel, it forms part of the peripheral stalk, linking F(1) to F(0). The chain is ATP synthase subunit b from Pseudomonas syringae pv. syringae (strain B728a).